Consider the following 73-residue polypeptide: Omega-hexatoxin-Ar1b (73 aa).

The signal sequence occupies residues methionine 1 to alanine 22. Residues glycine 23 to arginine 37 constitute a propeptide that is removed on maturation. 3 cysteine pairs are disulfide-bonded: cysteine 40–cysteine 54, cysteine 47–cysteine 58, and cysteine 53–cysteine 72.

The protein belongs to the neurotoxin 08 (Shiva) family. 01 (omega toxin) subfamily. Expressed by the venom gland.

It is found in the secreted. Insecticidal toxin that reversibly and voltage-independently blocks both mid-low- (M-LVA) and high-voltage-activated (HVA) calcium channels (Cav) in cockroach DUM neurons. Also causes a modest block of insect sodium channel currents (Nav). Induces potent excitatory symptoms, followed by flaccid paralysis leading to death in house crickets. The polypeptide is Omega-hexatoxin-Ar1b (Atrax robustus (Sydney funnel-web spider)).